We begin with the raw amino-acid sequence, 331 residues long: L-lactate dehydrogenase A chain (331 aa).

Residues Gly29–Lys57 and Arg98 each bind NAD(+). The substrate site is built by Arg105, Asn137, and Arg168. NAD(+) is bound at residue Asn137. His192 functions as the Proton acceptor in the catalytic mechanism. Position 247 (Thr247) interacts with substrate.

Belongs to the LDH/MDH superfamily. LDH family. In terms of assembly, homotetramer.

It is found in the cytoplasm. The enzyme catalyses (S)-lactate + NAD(+) = pyruvate + NADH + H(+). The protein operates within fermentation; pyruvate fermentation to lactate; (S)-lactate from pyruvate: step 1/1. Its function is as follows. Interconverts simultaneously and stereospecifically pyruvate and lactate with concomitant interconversion of NADH and NAD(+). This Patagonotothen tessellata (Black southern cod) protein is L-lactate dehydrogenase A chain (ldha).